The primary structure comprises 317 residues: Aspartate carbamoyltransferase catalytic subunit (317 aa).

The carbamoyl phosphate site is built by Arg-64 and Thr-65. Lys-92 provides a ligand contact to L-aspartate. 3 residues coordinate carbamoyl phosphate: Arg-114, His-142, and Gln-145. L-aspartate contacts are provided by Arg-176 and Arg-230. Residues Gly-271 and Pro-272 each coordinate carbamoyl phosphate.

It belongs to the aspartate/ornithine carbamoyltransferase superfamily. ATCase family. In terms of assembly, heterododecamer (2C3:3R2) of six catalytic PyrB chains organized as two trimers (C3), and six regulatory PyrI chains organized as three dimers (R2).

It carries out the reaction carbamoyl phosphate + L-aspartate = N-carbamoyl-L-aspartate + phosphate + H(+). Its pathway is pyrimidine metabolism; UMP biosynthesis via de novo pathway; (S)-dihydroorotate from bicarbonate: step 2/3. In terms of biological role, catalyzes the condensation of carbamoyl phosphate and aspartate to form carbamoyl aspartate and inorganic phosphate, the committed step in the de novo pyrimidine nucleotide biosynthesis pathway. This Nitratidesulfovibrio vulgaris (strain DP4) (Desulfovibrio vulgaris) protein is Aspartate carbamoyltransferase catalytic subunit.